The following is a 475-amino-acid chain: Pyruvate kinase (475 aa).

Arginine 36 contributes to the substrate binding site. K(+) contacts are provided by asparagine 38, serine 40, and aspartate 70. Asparagine 38–histidine 41 contributes to the ATP binding site. ATP-binding residues include arginine 77 and lysine 158. Glutamate 223 is a Mg(2+) binding site. Glycine 246, aspartate 247, and threonine 279 together coordinate substrate. Aspartate 247 provides a ligand contact to Mg(2+).

Belongs to the pyruvate kinase family. In terms of assembly, homotetramer. Requires a divalent metal cation as cofactor.

The catalysed reaction is pyruvate + ATP = phosphoenolpyruvate + ADP + H(+). It participates in carbohydrate degradation; glycolysis; pyruvate from D-glyceraldehyde 3-phosphate: step 5/5. This Thermococcus litoralis (strain ATCC 51850 / DSM 5473 / JCM 8560 / NS-C) protein is Pyruvate kinase (pki).